The sequence spans 373 residues: UDP-N-acetylglucosamine--N-acetylmuramyl-(pentapeptide) pyrophosphoryl-undecaprenol N-acetylglucosamine transferase (373 aa).

UDP-N-acetyl-alpha-D-glucosamine-binding positions include 15–17 (TGG), asparagine 126, arginine 170, serine 198, and glutamine 300.

The protein belongs to the glycosyltransferase 28 family. MurG subfamily.

The protein resides in the cell inner membrane. The catalysed reaction is di-trans,octa-cis-undecaprenyl diphospho-N-acetyl-alpha-D-muramoyl-L-alanyl-D-glutamyl-meso-2,6-diaminopimeloyl-D-alanyl-D-alanine + UDP-N-acetyl-alpha-D-glucosamine = di-trans,octa-cis-undecaprenyl diphospho-[N-acetyl-alpha-D-glucosaminyl-(1-&gt;4)]-N-acetyl-alpha-D-muramoyl-L-alanyl-D-glutamyl-meso-2,6-diaminopimeloyl-D-alanyl-D-alanine + UDP + H(+). The protein operates within cell wall biogenesis; peptidoglycan biosynthesis. Cell wall formation. Catalyzes the transfer of a GlcNAc subunit on undecaprenyl-pyrophosphoryl-MurNAc-pentapeptide (lipid intermediate I) to form undecaprenyl-pyrophosphoryl-MurNAc-(pentapeptide)GlcNAc (lipid intermediate II). The sequence is that of UDP-N-acetylglucosamine--N-acetylmuramyl-(pentapeptide) pyrophosphoryl-undecaprenol N-acetylglucosamine transferase from Methylobacterium nodulans (strain LMG 21967 / CNCM I-2342 / ORS 2060).